Here is a 446-residue protein sequence, read N- to C-terminus: AP-2 complex subunit mu (446 aa).

Phosphoserine is present on residues S145, S151, and S152. Phosphothreonine is present on T157. Positions 177-445 (KNSIYIDIVE…STRAGTCEIR (269 aa)) constitute an MHD domain.

It belongs to the adaptor complexes medium subunit family. In terms of assembly, adaptor protein complex 2 (AP-2) is a heterotetramer composed of two large adaptins (alpha-type subunit apl3 and beta-type subunit apl1), a medium chain (mu-type subunit apm4) and a small adaptin (sigma-type subunit aps2).

It is found in the cell membrane. It localises to the membrane. The protein localises to the coated pit. Component of the adaptor complexes which link clathrin to receptors in coated vesicles. Clathrin-associated protein complexes are believed to interact with the cytoplasmic tails of membrane proteins, leading to their selection and concentration. AP50 is a subunit of the plasma membrane adaptor (Potential). In Schizosaccharomyces pombe (strain 972 / ATCC 24843) (Fission yeast), this protein is AP-2 complex subunit mu (apm4).